Consider the following 420-residue polypeptide: Synaptosomal-associated protein 47 (420 aa).

2 consecutive t-SNARE coiled-coil homology domains span residues 110-172 (AEAA…LTEL) and 357-419 (TSEP…MKKL). The interval 338–357 (ATHCEPSSGSQEGRPLQLQT) is disordered. Residues 342-357 (EPSSGSQEGRPLQLQT) show a composition bias toward polar residues.

The protein belongs to the SVAP1 family. As to quaternary structure, forms a complex containing SNAP47, VAMP2 and STX1A. Associates with the BLOC-1 complex. Interacts with BLOC1S6.

The protein resides in the endomembrane system. Its subcellular location is the cytoplasm. It localises to the perinuclear region. Functionally, may play a role in intracellular membrane fusion. The protein is Synaptosomal-associated protein 47 (SNAP47) of Bos taurus (Bovine).